Here is a 291-residue protein sequence, read N- to C-terminus: Geranyl diphosphate 2-C-methyltransferase (291 aa).

It belongs to the geranyl diphosphate 2-C-methyltransferase family. Requires Mg(2+) as cofactor.

It carries out the reaction (2E)-geranyl diphosphate + S-adenosyl-L-methionine = (E)-2-methylgeranyl diphosphate + S-adenosyl-L-homocysteine + H(+). In terms of biological role, catalyzes the SAM-dependent methylation of geranyl diphosphate (GPP) to yield (E)-2-methylgeranyl diphosphate (2-MeGPP). The polypeptide is Geranyl diphosphate 2-C-methyltransferase (Streptomyces ambofaciens (strain ATCC 23877 / 3486 / DSM 40053 / JCM 4204 / NBRC 12836 / NRRL B-2516)).